A 318-amino-acid chain; its full sequence is MFTKILGTGSYLPKYIRSNIILEKMVDTSNAWIIARTGIKERRISNSSETVAKMGYFASKKALDMSCIEANEIGIIIVATTSSSHAFPSSACQIQRDLKISDTIAFDLSAACSGFVYALDVANQYIKNGVVKYALIVGSDILSHFLNPNDRSTLILFGDGAGAVILGRSKSPGIISTHLHANGYYGDLLTLPHYNTQNPEKLSVYLTMSGNKVFKMAIATLTGIINETLHANNLQQDELDWLVPHQANLRIISKAAKRLNIDMEKIIITLHKHGNTSAASIPLALDEAVRDGRIKSNQLLLLEAFGAGLTWGSVLLRF.

Catalysis depends on residues Cys112 and His245. The segment at 246-250 (QANLR) is ACP-binding. Asn275 is an active-site residue.

The protein belongs to the thiolase-like superfamily. FabH family. In terms of assembly, homodimer.

It localises to the cytoplasm. It catalyses the reaction malonyl-[ACP] + acetyl-CoA + H(+) = 3-oxobutanoyl-[ACP] + CO2 + CoA. The protein operates within lipid metabolism; fatty acid biosynthesis. In terms of biological role, catalyzes the condensation reaction of fatty acid synthesis by the addition to an acyl acceptor of two carbons from malonyl-ACP. Catalyzes the first condensation reaction which initiates fatty acid synthesis and may therefore play a role in governing the total rate of fatty acid production. Possesses both acetoacetyl-ACP synthase and acetyl transacylase activities. Its substrate specificity determines the biosynthesis of branched-chain and/or straight-chain of fatty acids. This chain is Beta-ketoacyl-[acyl-carrier-protein] synthase III, found in Blochmanniella floridana.